A 375-amino-acid chain; its full sequence is Isopentenyl-diphosphate delta-isomerase (375 aa).

Substrate is bound at residue Arg-8–Lys-9. Residues Thr-65, Gly-66–Thr-68, Ser-96, and Asn-125 each bind FMN. Residue Ser-96–Arg-98 coordinates substrate. Gln-160 provides a ligand contact to substrate. Mg(2+) is bound at residue Glu-161. Residues Lys-192, Thr-222, Gly-273–Arg-275, and Ala-294–Leu-295 each bind FMN.

This sequence belongs to the IPP isomerase type 2 family. In terms of assembly, homooctamer. Dimer of tetramers. The cofactor is FMN. It depends on NADPH as a cofactor. Requires Mg(2+) as cofactor.

The protein resides in the cytoplasm. The catalysed reaction is isopentenyl diphosphate = dimethylallyl diphosphate. Functionally, involved in the biosynthesis of isoprenoids. Catalyzes the 1,3-allylic rearrangement of the homoallylic substrate isopentenyl (IPP) to its allylic isomer, dimethylallyl diphosphate (DMAPP). The sequence is that of Isopentenyl-diphosphate delta-isomerase from Aeropyrum pernix (strain ATCC 700893 / DSM 11879 / JCM 9820 / NBRC 100138 / K1).